We begin with the raw amino-acid sequence, 257 residues long: 3-alpha-hydroxysteroid dehydrogenase/carbonyl reductase (257 aa).

NAD(+) is bound by residues Gly8–Ile13, Asp32, Asp41–Leu42, and Gly71. Ser114 is a binding site for substrate. NAD(+) is bound by residues Tyr155 and Lys159. Catalysis depends on Tyr155, which acts as the Proton acceptor.

It belongs to the short-chain dehydrogenases/reductases (SDR) family. As to quaternary structure, homodimer.

It localises to the cytoplasm. The enzyme catalyses a 3alpha-hydroxysteroid + NADP(+) = a 3-oxosteroid + NADPH + H(+). The catalysed reaction is a 3alpha-hydroxysteroid + NAD(+) = a 3-oxosteroid + NADH + H(+). Catalyzes the reversible interconversion of hydroxy and oxo groups at position 3 of the steroid nucleus. Along with the 3 alpha-hydroxysteroid dehydrogenase and 3-oxo-reductase activities towards a variety of cis or trans fused A/B ring steroids, it also reduces several xenobiotic carbonyl compounds, including a metyrapone-based class of insecticides, to the respective alcohol metabolites. No detectable activity on testosterone, progesterone or 3-oxo-desogestrel. This chain is 3-alpha-hydroxysteroid dehydrogenase/carbonyl reductase (hsdA), found in Comamonas testosteroni (Pseudomonas testosteroni).